Here is a 320-residue protein sequence, read N- to C-terminus: tRNA dimethylallyltransferase (320 aa).

17–24 is a binding site for ATP; it reads GPTASGKT. Residue 19 to 24 participates in substrate binding; sequence TASGKT. 3 interaction with substrate tRNA regions span residues 42-45, 166-170, and 249-254; these read DSAL, QRIQR, and RCVGYR.

It belongs to the IPP transferase family. In terms of assembly, monomer. Mg(2+) is required as a cofactor.

It carries out the reaction adenosine(37) in tRNA + dimethylallyl diphosphate = N(6)-dimethylallyladenosine(37) in tRNA + diphosphate. In terms of biological role, catalyzes the transfer of a dimethylallyl group onto the adenine at position 37 in tRNAs that read codons beginning with uridine, leading to the formation of N6-(dimethylallyl)adenosine (i(6)A). The polypeptide is tRNA dimethylallyltransferase (Herminiimonas arsenicoxydans).